Here is a 197-residue protein sequence, read N- to C-terminus: Imidazoleglycerol-phosphate dehydratase (197 aa).

The protein belongs to the imidazoleglycerol-phosphate dehydratase family.

Its subcellular location is the cytoplasm. It catalyses the reaction D-erythro-1-(imidazol-4-yl)glycerol 3-phosphate = 3-(imidazol-4-yl)-2-oxopropyl phosphate + H2O. Its pathway is amino-acid biosynthesis; L-histidine biosynthesis; L-histidine from 5-phospho-alpha-D-ribose 1-diphosphate: step 6/9. The protein is Imidazoleglycerol-phosphate dehydratase of Erythrobacter litoralis (strain HTCC2594).